The following is a 410-amino-acid chain: MRNLLENIKKNSQKLLNLTPKDKEKIILKLAQILRENFKIILEANKKDMANFTKSGAMKDRLLLDEKRILALCEGLEKIAYIEDPIGKISKGWKNYAGLSIQKMSIPLGLICVIYEARPSLSAEIAALMIKSSNACVFKGGSEAKFTNEAIFTLVNKVLKEFDLQDCFAMFTQRDEILQILAFDDLIDVIIPRGSSNMIQEIANNTKIPLIKQNKGLCHAFVDQSANLDMALKIILNAKCQRVSVCNALETLLIHEKIAKNFISLLIPEFEKFKVKIHAHENALAYFNNSNLKIFKANENTFDTEWLDFALSVKLVKDCDEAIEHINKHSSLHSETIISNDASNIAKFQRLINSSCIYANASTRFSDGGEFGFGGEVGISTSKLHARGPMGIEDICTYKYIINGEGQIRE.

Belongs to the gamma-glutamyl phosphate reductase family.

It is found in the cytoplasm. It carries out the reaction L-glutamate 5-semialdehyde + phosphate + NADP(+) = L-glutamyl 5-phosphate + NADPH + H(+). The protein operates within amino-acid biosynthesis; L-proline biosynthesis; L-glutamate 5-semialdehyde from L-glutamate: step 2/2. In terms of biological role, catalyzes the NADPH-dependent reduction of L-glutamate 5-phosphate into L-glutamate 5-semialdehyde and phosphate. The product spontaneously undergoes cyclization to form 1-pyrroline-5-carboxylate. This Campylobacter jejuni subsp. jejuni serotype O:2 (strain ATCC 700819 / NCTC 11168) protein is Gamma-glutamyl phosphate reductase.